The primary structure comprises 608 residues: Phosphomethylpyrimidine synthase (608 aa).

Substrate contacts are provided by residues asparagine 216, methionine 245, tyrosine 274, histidine 310, 330–332, 371–374, and glutamate 410; these read SRG and DGLR. Position 414 (histidine 414) interacts with Zn(2+). Tyrosine 437 contacts substrate. Zn(2+) is bound at residue histidine 478. Cysteine 558, cysteine 561, and cysteine 566 together coordinate [4Fe-4S] cluster.

It belongs to the ThiC family. In terms of assembly, homodimer. Requires [4Fe-4S] cluster as cofactor.

The catalysed reaction is 5-amino-1-(5-phospho-beta-D-ribosyl)imidazole + S-adenosyl-L-methionine = 4-amino-2-methyl-5-(phosphooxymethyl)pyrimidine + CO + 5'-deoxyadenosine + formate + L-methionine + 3 H(+). Its pathway is cofactor biosynthesis; thiamine diphosphate biosynthesis. In terms of biological role, catalyzes the synthesis of the hydroxymethylpyrimidine phosphate (HMP-P) moiety of thiamine from aminoimidazole ribotide (AIR) in a radical S-adenosyl-L-methionine (SAM)-dependent reaction. The polypeptide is Phosphomethylpyrimidine synthase (Ruegeria sp. (strain TM1040) (Silicibacter sp.)).